The sequence spans 420 residues: Serine hydroxymethyltransferase (420 aa).

Residues Leu-123 and Gly-127–Leu-129 contribute to the (6S)-5,6,7,8-tetrahydrofolate site. Lys-232 carries the post-translational modification N6-(pyridoxal phosphate)lysine. Residue Ser-357–Phe-359 coordinates (6S)-5,6,7,8-tetrahydrofolate.

Belongs to the SHMT family. In terms of assembly, homodimer. Requires pyridoxal 5'-phosphate as cofactor.

The protein resides in the cytoplasm. The enzyme catalyses (6R)-5,10-methylene-5,6,7,8-tetrahydrofolate + glycine + H2O = (6S)-5,6,7,8-tetrahydrofolate + L-serine. It functions in the pathway one-carbon metabolism; tetrahydrofolate interconversion. It participates in amino-acid biosynthesis; glycine biosynthesis; glycine from L-serine: step 1/1. Its function is as follows. Catalyzes the reversible interconversion of serine and glycine with tetrahydrofolate (THF) serving as the one-carbon carrier. This reaction serves as the major source of one-carbon groups required for the biosynthesis of purines, thymidylate, methionine, and other important biomolecules. Also exhibits THF-independent aldolase activity toward beta-hydroxyamino acids, producing glycine and aldehydes, via a retro-aldol mechanism. This chain is Serine hydroxymethyltransferase, found in Streptococcus pyogenes serotype M4 (strain MGAS10750).